The following is a 379-amino-acid chain: L-lactate dehydrogenase (379 aa).

The region spanning 1–379 (MIISASTDYR…IGRDSLVNLP (379 aa)) is the FMN hydroxy acid dehydrogenase domain. A substrate-binding site is contributed by Tyr24. FMN contacts are provided by Ser106 and Gln127. Tyr129 is a substrate binding site. Thr155 contributes to the FMN binding site. Residue Arg164 coordinates substrate. Residue Lys251 coordinates FMN. His275 serves as the catalytic Proton acceptor. Position 278 (Arg278) interacts with substrate. 306-330 (DSGIRTGLDVVRMLALGADTVLLGR) serves as a coordination point for FMN.

Belongs to the FMN-dependent alpha-hydroxy acid dehydrogenase family. It depends on FMN as a cofactor.

It localises to the cell inner membrane. The catalysed reaction is (S)-lactate + A = pyruvate + AH2. Catalyzes the conversion of L-lactate to pyruvate. Is coupled to the respiratory chain. This Stenotrophomonas maltophilia (strain R551-3) protein is L-lactate dehydrogenase.